The chain runs to 302 residues: Probable 2-(5''-triphosphoribosyl)-3'-dephosphocoenzyme-A synthase (302 aa).

This sequence belongs to the CitG/MdcB family.

It catalyses the reaction 3'-dephospho-CoA + ATP = 2'-(5''-triphospho-alpha-D-ribosyl)-3'-dephospho-CoA + adenine. This Albidiferax ferrireducens (strain ATCC BAA-621 / DSM 15236 / T118) (Rhodoferax ferrireducens) protein is Probable 2-(5''-triphosphoribosyl)-3'-dephosphocoenzyme-A synthase.